A 695-amino-acid polypeptide reads, in one-letter code: Elongation factor G (695 aa).

One can recognise a tr-type G domain in the interval 12 to 286 (DKLRNIGIMA…AVIDYLPSPL (275 aa)). Residues 21–28 (AHIDAGKT), 85–89 (DTPGH), and 139–142 (NKMD) each bind GTP.

Belongs to the TRAFAC class translation factor GTPase superfamily. Classic translation factor GTPase family. EF-G/EF-2 subfamily.

It is found in the cytoplasm. Its function is as follows. Catalyzes the GTP-dependent ribosomal translocation step during translation elongation. During this step, the ribosome changes from the pre-translocational (PRE) to the post-translocational (POST) state as the newly formed A-site-bound peptidyl-tRNA and P-site-bound deacylated tRNA move to the P and E sites, respectively. Catalyzes the coordinated movement of the two tRNA molecules, the mRNA and conformational changes in the ribosome. The polypeptide is Elongation factor G (Thermotoga sp. (strain RQ2)).